The primary structure comprises 218 residues: Large ribosomal subunit protein bL25 (218 aa).

This sequence belongs to the bacterial ribosomal protein bL25 family. CTC subfamily. Part of the 50S ribosomal subunit; part of the 5S rRNA/L5/L18/L25 subcomplex. Contacts the 5S rRNA. Binds to the 5S rRNA independently of L5 and L18.

Its function is as follows. This is one of the proteins that binds to the 5S RNA in the ribosome where it forms part of the central protuberance. The polypeptide is Large ribosomal subunit protein bL25 (Polaromonas naphthalenivorans (strain CJ2)).